The chain runs to 263 residues: Small ribosomal subunit protein uS2m (263 aa).

Residues 1 to 15 (MLSRKLSPEQLVARR) constitute a mitochondrion transit peptide.

It belongs to the universal ribosomal protein uS2 family. As to quaternary structure, component of the mitochondrial small ribosomal subunit (mt-SSU). Mature yeast 74S mitochondrial ribosomes consist of a small (37S) and a large (54S) subunit. The 37S small subunit contains a 15S ribosomal RNA (15S mt-rRNA) and at least 32 different proteins. The 54S large subunit contains a 21S rRNA (21S mt-rRNA) and at least 45 different proteins.

Its subcellular location is the mitochondrion. Its function is as follows. Component of the mitochondrial ribosome (mitoribosome), a dedicated translation machinery responsible for the synthesis of mitochondrial genome-encoded proteins, including at least some of the essential transmembrane subunits of the mitochondrial respiratory chain. The mitoribosomes are attached to the mitochondrial inner membrane and translation products are cotranslationally integrated into the membrane. In Schizosaccharomyces pombe (strain 972 / ATCC 24843) (Fission yeast), this protein is Small ribosomal subunit protein uS2m.